Consider the following 119-residue polypeptide: Beta-2-microglobulin (119 aa).

The N-terminal stretch at 1-21 is a signal peptide; sequence MGKAAAVVLVTLVALLGLAQA. The Ig-like C1-type domain maps to 25–113; that stretch reads PKVQVYSRFP…HETLKEPQVY (89 aa). An intrachain disulfide couples C45 to C100.

The protein belongs to the beta-2-microglobulin family. Heterodimer of an alpha chain and a beta chain. Beta-2-microglobulin is the beta-chain of major histocompatibility complex class I molecules.

Its subcellular location is the secreted. Component of the class I major histocompatibility complex (MHC). Involved in the presentation of peptide antigens to the immune system. The protein is Beta-2-microglobulin (B2M) of Gallus gallus (Chicken).